A 150-amino-acid chain; its full sequence is Endoribonuclease YbeY (150 aa).

H113, H117, and H123 together coordinate Zn(2+).

This sequence belongs to the endoribonuclease YbeY family. Requires Zn(2+) as cofactor.

It localises to the cytoplasm. In terms of biological role, single strand-specific metallo-endoribonuclease involved in late-stage 70S ribosome quality control and in maturation of the 3' terminus of the 16S rRNA. The protein is Endoribonuclease YbeY of Wolbachia sp. subsp. Drosophila simulans (strain wRi).